The chain runs to 527 residues: BTB/POZ domain-containing protein At4g01160 (527 aa).

The BTB domain occupies 111–180 (NNNTSVLSVQ…MYSNSLSVTA (70 aa)). The BACK domain maps to 233–327 (VKPLTNAARQ…HMTTDRLKKI (95 aa)).

The protein operates within protein modification; protein ubiquitination. In terms of biological role, may act as a substrate-specific adapter of an E3 ubiquitin-protein ligase complex (CUL3-RBX1-BTB) which mediates the ubiquitination and subsequent proteasomal degradation of target proteins. In Arabidopsis thaliana (Mouse-ear cress), this protein is BTB/POZ domain-containing protein At4g01160.